The chain runs to 147 residues: Large ribosomal subunit protein uL13 (147 aa).

This sequence belongs to the universal ribosomal protein uL13 family. As to quaternary structure, part of the 50S ribosomal subunit.

Its function is as follows. This protein is one of the early assembly proteins of the 50S ribosomal subunit, although it is not seen to bind rRNA by itself. It is important during the early stages of 50S assembly. The sequence is that of Large ribosomal subunit protein uL13 from Mycolicibacterium gilvum (strain PYR-GCK) (Mycobacterium gilvum (strain PYR-GCK)).